Consider the following 190-residue polypeptide: NADH-quinone oxidoreductase subunit B (190 aa).

Cysteine 67, cysteine 68, cysteine 132, and cysteine 162 together coordinate [4Fe-4S] cluster.

It belongs to the complex I 20 kDa subunit family. As to quaternary structure, NDH-1 is composed of 14 different subunits. Subunits NuoB, C, D, E, F, and G constitute the peripheral sector of the complex. [4Fe-4S] cluster is required as a cofactor.

Its subcellular location is the cell inner membrane. The enzyme catalyses a quinone + NADH + 5 H(+)(in) = a quinol + NAD(+) + 4 H(+)(out). Functionally, NDH-1 shuttles electrons from NADH, via FMN and iron-sulfur (Fe-S) centers, to quinones in the respiratory chain. The immediate electron acceptor for the enzyme in this species is believed to be ubiquinone. Couples the redox reaction to proton translocation (for every two electrons transferred, four hydrogen ions are translocated across the cytoplasmic membrane), and thus conserves the redox energy in a proton gradient. The sequence is that of NADH-quinone oxidoreductase subunit B from Anaplasma marginale (strain Florida).